A 467-amino-acid polypeptide reads, in one-letter code: Protection of telomeres protein 1a (467 aa).

The protein belongs to the telombin family. As to quaternary structure, component of the telomerase holoenzyme complex at least composed of TERT, CBF5 and POT1a. The RNA molecule associated to the telomerase complex, and providing a template for telomeric DNA synthesis, is most likely TR and not TER1 as described previously. Interacts with the N-terminal part of TERT. Interacts with CBF5. Interacts with CTC1 and STN1. Does not interact with TEN1. In terms of tissue distribution, expressed in roots, rosette leaves, cauline leaves, stems and flowers.

The protein resides in the nucleus. It is found in the chromosome. Its subcellular location is the telomere. It localises to the nucleolus. The protein localises to the cytoplasm. In terms of biological role, component of the telomerase ribonucleoprotein (RNP) complex that is essential for the positive regulation of telomere length. Binds RNA non-specifically. Binds specifically single-stranded telomeric DNA. Not required to recruit telomerase to telomeres, but stimulates TER1 RNP repeat addition processivity. This Arabidopsis thaliana (Mouse-ear cress) protein is Protection of telomeres protein 1a.